Reading from the N-terminus, the 77-residue chain is U8-lycotoxin-Ls1j (77 aa).

The signal sequence occupies residues 1-20 (MKLIIFTGLILFAIVSLIEA). Residues 21–26 (QANNEK) constitute a propeptide that is removed on maturation.

Belongs to the neurotoxin 19 (CSTX) family. 08 (U8-Lctx) subfamily. Contains 4 disulfide bonds. Expressed by the venom gland.

It localises to the secreted. The sequence is that of U8-lycotoxin-Ls1j from Lycosa singoriensis (Wolf spider).